A 610-amino-acid chain; its full sequence is Phosphomethylpyrimidine synthase (610 aa).

Residues Asn-216, Met-245, Tyr-274, His-310, 330-332 (SRG), 371-374 (DGLR), and Glu-410 each bind substrate. Residue His-414 coordinates Zn(2+). Tyr-437 is a binding site for substrate. Residue His-478 coordinates Zn(2+). 3 residues coordinate [4Fe-4S] cluster: Cys-558, Cys-561, and Cys-566.

This sequence belongs to the ThiC family. As to quaternary structure, homodimer. The cofactor is [4Fe-4S] cluster.

The enzyme catalyses 5-amino-1-(5-phospho-beta-D-ribosyl)imidazole + S-adenosyl-L-methionine = 4-amino-2-methyl-5-(phosphooxymethyl)pyrimidine + CO + 5'-deoxyadenosine + formate + L-methionine + 3 H(+). The protein operates within cofactor biosynthesis; thiamine diphosphate biosynthesis. Catalyzes the synthesis of the hydroxymethylpyrimidine phosphate (HMP-P) moiety of thiamine from aminoimidazole ribotide (AIR) in a radical S-adenosyl-L-methionine (SAM)-dependent reaction. The sequence is that of Phosphomethylpyrimidine synthase from Allorhizobium ampelinum (strain ATCC BAA-846 / DSM 112012 / S4) (Agrobacterium vitis (strain S4)).